A 292-amino-acid chain; its full sequence is Probable phytol kinase 2, chloroplastic (292 aa).

A chloroplast-targeting transit peptide spans 1–49 (MAAAAAWTGAASPNSLLLSRSPPHAAALAPSPGSSMRRRLLLGVGTPAV). 6 helical membrane-spanning segments follow: residues 98-118 (VVHV…SNST), 120-142 (ARYF…GLRL), 148-168 (LELL…VLVF), 216-236 (FISG…LGYI), 243-263 (ALGK…VPVT), and 265-285 (VVDD…LLFS).

It belongs to the polyprenol kinase family.

The protein localises to the plastid. The protein resides in the chloroplast membrane. The catalysed reaction is phytol + CTP = phytyl phosphate + CDP + H(+). It functions in the pathway cofactor biosynthesis; tocopherol biosynthesis. Its function is as follows. Involved in the activation and reutilization of phytol from chlorophyll degradation in plant metabolism, including tocopherol biosynthesis. Catalyzes the conversion of phytol to phytol monophosphate (PMP). This is Probable phytol kinase 2, chloroplastic from Glycine max (Soybean).